Here is a 311-residue protein sequence, read N- to C-terminus: Olfactory receptor 5AN1 (311 aa).

At 1–26 (MTGGGNITEITYFILLGFSDFPRIIK) the chain is on the extracellular side. Residue N6 is glycosylated (N-linked (GlcNAc...) asparagine). Residues 27-47 (VLFTIFLVIYITSLAWNLSLI) traverse the membrane as a helical segment. The Cytoplasmic portion of the chain corresponds to 48-55 (VLIRMDSH). A helical membrane pass occupies residues 56–76 (LHTPMYFFLSNLSFIDVCYIS). Residues 77 to 100 (STVPKMLSNLLQEQQTITFVGCII) are Extracellular-facing. A disulfide bond links C98 and C190. A helical membrane pass occupies residues 101 to 121 (QYFIFSTMGLSESCLMTAMAY). The Cytoplasmic portion of the chain corresponds to 122-134 (DRYAAICNPLLYS). Residues 135 to 155 (SIMSPTLCVWMVLGAYMTGLT) traverse the membrane as a helical segment. At 156-197 (ASLFQIGALLQLHFCGSNVIRHFFCDMPQLLILSCTDTFFVQ) the chain is on the extracellular side. Residues 198–218 (VMTAILTMFFGIASALVIMIS) form a helical membrane-spanning segment. Residues 219-238 (YGYIGISIMKITSAKGRSKA) lie on the Cytoplasmic side of the membrane. Residues 239-259 (FNTCASHLTAVSLFYTSGIFV) form a helical membrane-spanning segment. The Extracellular segment spans residues 260-272 (YLSSSSGGSSSFD). The chain crosses the membrane as a helical span at residues 273-293 (RFASVFYTVVIPMLNPLIYSL). The Cytoplasmic portion of the chain corresponds to 294–311 (RNKEIKDALKRLQKRKCC).

The protein belongs to the G-protein coupled receptor 1 family.

It localises to the cell membrane. Functionally, odorant receptor for musk, which specifically recognizes muscone, musk xylol, and musk ketone. Ligand-binding causes a conformation change that triggers signaling via G(s)-class of G alpha protein GNAL, activating adenylyl cyclase. In Homo sapiens (Human), this protein is Olfactory receptor 5AN1.